A 687-amino-acid polypeptide reads, in one-letter code: Mediator of RNA polymerase II transcription subunit 17 (687 aa).

The span at 30-43 (LSSNPNSSLHSPTS) shows a compositional bias: low complexity. 2 disordered regions span residues 30-70 (LSSN…NKTK) and 130-189 (QLGS…ETDD). 3 stretches are compositionally biased toward basic and acidic residues: residues 56–70 (TSIR…NKTK), 136–147 (SDGHNSEKKDTD), and 167–183 (KDNP…KTNE).

The protein belongs to the Mediator complex subunit 17 family. Component of the Mediator complex, which is composed of at least 21 subunits that form three structurally distinct submodules. The Mediator head module contains MED6, MED8, MED11, SRB4/MED17, SRB5/MED18, ROX3/MED19, SRB2/MED20 and SRB6/MED22, the middle module contains MED1, MED4, NUT1/MED5, MED7, CSE2/MED9, NUT2/MED10, SRB7/MED21 and SOH1/MED31, and the tail module contains MED2, PGD1/MED3, RGR1/MED14, GAL11/MED15 and SIN4/MED16. The head and the middle modules interact directly with RNA polymerase II, whereas the elongated tail module interacts with gene-specific regulatory proteins. The head module may also interact with the TFIIF complex. SRB4/MED17 interacts directly with MED6, MED11, ROX3/MED19, SRB2/MED20 and SRB6/MED22. Interacts directly with the activator GAL4.

It is found in the nucleus. Component of the Mediator complex, a coactivator involved in the regulated transcription of nearly all RNA polymerase II-dependent genes. Mediator functions as a bridge to convey information from gene-specific regulatory proteins to the basal RNA polymerase II transcription machinery. The Mediator complex, having a compact conformation in its free form, is recruited to promoters by direct interactions with regulatory proteins and serves for the assembly of a functional preinitiation complex with RNA polymerase II and the general transcription factors. The Mediator complex unfolds to an extended conformation and partially surrounds RNA polymerase II, specifically interacting with the unphosphorylated form of the C-terminal domain (CTD) of RNA polymerase II. The Mediator complex dissociates from the RNA polymerase II holoenzyme and stays at the promoter when transcriptional elongation begins. This Saccharomyces cerevisiae (strain ATCC 204508 / S288c) (Baker's yeast) protein is Mediator of RNA polymerase II transcription subunit 17 (SRB4).